A 99-amino-acid chain; its full sequence is uncharacterized protein (99 aa).

This is an uncharacterized protein from Mycobacterium tuberculosis (strain CDC 1551 / Oshkosh).